Reading from the N-terminus, the 184-residue chain is Casparian strip membrane protein 1 (184 aa).

Topologically, residues 1-24 are cytoplasmic; the sequence is MKESGEHGETSKAPLNRGVSKGLS. The chain crosses the membrane as a helical span at residues 25–45; that stretch reads VLDLILRFIAIIGTLASAIAM. Residues 46–72 lie on the Extracellular side of the membrane; it reads GTTNETLPFFTQFIRFKAQYSDLPTLT. The N-linked (GlcNAc...) asparagine glycan is linked to N49. The helical transmembrane segment at 73-93 threads the bilayer; sequence FFVVANSIVCAYLILSLPLSI. Over 94–105 the chain is Cytoplasmic; it reads VHIIRSRAKFSR. Residues 106-126 form a helical membrane-spanning segment; sequence LLLIFLDAVMLALVTAGASAA. The Extracellular portion of the chain corresponds to 127 to 159; that stretch reads AAIVYLAHKGNVRANWLAICQQFDSFCERISGS. The chain crosses the membrane as a helical span at residues 160 to 180; sequence LIGSFGAMVVLILLILLSAIA. At 181–184 the chain is on the cytoplasmic side; that stretch reads LARR.

Belongs to the Casparian strip membrane proteins (CASP) family. As to quaternary structure, homodimer and heterodimers.

It localises to the cell membrane. Functionally, regulates membrane-cell wall junctions and localized cell wall deposition. Required for establishment of the Casparian strip membrane domain (CSD) and the subsequent formation of Casparian strips, a cell wall modification of the root endodermis that determines an apoplastic barrier between the intraorganismal apoplasm and the extraorganismal apoplasm and prevents lateral diffusion. The chain is Casparian strip membrane protein 1 from Panicum virgatum (Blackwell switchgrass).